The primary structure comprises 440 residues: MITKIHARSVYDSRGNPTVEVDLTTTDTGLHRAIVPSGASTGQHEAIELRDKDKTKWAGKGVLKAVENVNTIIAPALIKEKFDVKDQATIDKFLIDLDGTPNKAKLGANAILGVSLAVAKAGAAAKKVPLYAHVADLAGTKKPFVLPVPFMNVINGGSHAGGRLAFQEFMIVPSEAPSFTEAMRQGAEVYQILKTLTKKKYGQSAGNVGDEGGWPDIQTVEEALDLITDAIDKAGYTGQIKIAMDVASSEFYKEDAKKYDLDFKNPDSDSSKWLTYQELADLYKSLAQRYPIVSIEDPFAEDDWEAWAHFYKTSDFQIVGDDLTVTNPIRIKRAIDEKSCNALLLKVNQIATLTESIQAAKDSYSAGWGVMVSHRSGETEDVTIADIVVGLRAGQIKTGAPARSERLAKLNQILRIEEELGEQAIYAGTSSEPPHLYIFI.

Substrate contacts are provided by histidine 159 and glutamate 168. Residue glutamate 211 is the Proton donor of the active site. Positions 245, 296, and 321 each coordinate Mg(2+). Residues glutamate 296 and aspartate 321 each contribute to the substrate site. Lysine 346 functions as the Proton acceptor in the catalytic mechanism. Substrate contacts are provided by residues 373-376 (SHRS) and lysine 397.

It belongs to the enolase family. As to quaternary structure, homodimer. Mg(2+) is required as a cofactor.

It localises to the cytoplasm. It carries out the reaction (2R)-2-phosphoglycerate = phosphoenolpyruvate + H2O. Its pathway is carbohydrate degradation; glycolysis; pyruvate from D-glyceraldehyde 3-phosphate: step 4/5. The sequence is that of Enolase (eno-1) from Tuber borchii (White truffle).